The sequence spans 469 residues: RNA-editing ligase 1, mitochondrial (469 aa).

The transit peptide at 1-44 (MQLQRLGAPLLKRLVGGCIRQSTAPIMPCVVVSGSGVFLTPVRT) directs the protein to the mitochondrion. Residues 59 to 61 (IEI), 86 to 92 (EKVHGTN), arginine 111, glutamate 159, phenylalanine 209, and 307 to 309 (KLR) each bind ATP. Lysine 87 acts as the N6-AMP-lysine intermediate in catalysis. The disordered stretch occupies residues 450–469 (AAAQSEAIPPLSPAAPTKGE).

Belongs to the RNA ligase 2 family. As to quaternary structure, component of the RNA editing complex (editosome), a 1600 kDa complex composed of at least 20 proteins. Interacts with terminal uridylyltransferase MEAT1.

The protein resides in the mitochondrion. The catalysed reaction is ATP + (ribonucleotide)n-3'-hydroxyl + 5'-phospho-(ribonucleotide)m = (ribonucleotide)n+m + AMP + diphosphate.. Its function is as follows. Essential for RNA editing. RNA editing in kinetoplastid mitochondria inserts and deletes uridylates at multiple sites in pre-mRNAs as directed by guide RNAs. This is RNA-editing ligase 1, mitochondrial (REL1) from Trypanosoma brucei brucei.